A 417-amino-acid polypeptide reads, in one-letter code: Citrate synthase-related protein DDB_G0287281 (417 aa).

Positions 284–317 (NKNNNNNNNNNNNNNNNNNNNNNNNNSEDDDDDN) are disordered. Residues 286–309 (NNNNNNNNNNNNNNNNNNNNNNNN) are compositionally biased toward low complexity.

This sequence belongs to the citrate synthase family.

The sequence is that of Citrate synthase-related protein DDB_G0287281 from Dictyostelium discoideum (Social amoeba).